Consider the following 1219-residue polypeptide: MLVVNSLLKLLQRQTYTCLSHRYGLYLCFGGLVLMIVSAFQFGEVVVEWSRDQYHVLFDSYRDNVAGKSFQTRLCLPMPIDVVYTWVNGTDINLLKDLRAVRQRLEEEQKALRERLGKNGSEITEAPKGRPECLLSHCIMGPVLVLDPALPANITVKELPTLSAAFSSAKELLQVAKPLHPSSSVTALLFHSHTEAEKAHADALKDLLTHSISRGYLTTDKEAPGLVRMHTLAYLSGFPASLKETEQLRVKLPAVVTSKTKKLQLYSEASIALLHLNTAQDFTDLTQQAKKNLTLDGKELTVSSAFLFWDLTAISQSKQDEDVSASRFEDNEELRYSLRSIEKHAPWVRHIFIVTNGQIPSWLNLDNPRVSVVTHQDIFQNQTHLPTFSSPAIETHIHRIPGLSQKFIYLNDDVMFGKDVWPDDFYSHSKGQKVYLTWPVPNCAEGCPGSWIKDGYCDKACNNSACDWDGGDCQGSSRFGGAGGSVIGGGQPWQFAGGLGGLAGMSFCNQGCANSWLADKFCDQACNVLACGFDVGDCGQDNLNQLHRIVLRRNQTLYTLPQGELRPYFSFSGLANRVSEAHVADNQVLRHTSVANKWKTIHLLLLPGHNATQIHYNITFQSTDHHDFIMTFSVSVDTRELPKSNTSTPVRDKEEEPKPTVATPEPEVPFEAVPKEKQGPKVREQTHGDVQVPVLNETLLPDEVKIELKKLNEKLMSGDITIKGFNLTKAMLLEPYKEKDQFTLKHEKDKEEKQKLSPVAQLQNERAAARVKREKGENVDQLKPVAPSLVPVQIDDVTTKAQSRLFNIEKPHMFHLLSNLKGNLSKERDSDSEGHLRERPTGRRLQFYSDSLNRGFLPWEKRKFFQDLMEEVNRLQTELQYTADRTATGRRLQDTFADSLRYVNRLLNAQFGFTSRKVPAHMPHMIDRLIMQELQDTFPQEFDKTSSHRVRHSEDMQFAFSYFYFLMSAVQQLNISEVFDEIDTDHSGVLSDREIRTLATRIHELPLSLQDLTSLEQMLINCSKSLPSNLTHLHAVSPTQEAYYDPSMPPVTKGLVIHCKPITERIHKAFKDQNKYKFEIMGEEEIAFKMIRTNVSHVVGQLDDIRKNPRKFICLNDNIDHIHKDAGTVKAVLRDFYESMFPLPSQFELPREYRNRFLHMTELQEWRIYRDKLKFWTHCVLVTLVVFTVMSFFAEQLVMLKRWLFPRRRVSKDANPERV.

The chain crosses the membrane as a helical span at residues 27–47 (LCFGGLVLMIVSAFQFGEVVV). 5 N-linked (GlcNAc...) asparagine glycosylation sites follow: Asn88, Asn119, Asn153, Asn292, and Asn381. Cystine bridges form between Cys443–Cys466, Cys457–Cys473, Cys508–Cys531, and Cys522–Cys538. LNR repeat units follow at residues 443–478 (CAEG…GSSR) and 508–538 (CNQG…VGDC). Asp454 serves as a coordination point for Ca(2+). N-linked (GlcNAc...) asparagine glycosylation occurs at Asn462. 5 residues coordinate Ca(2+): Asp469, Asp472, Asp519, Asp534, and Asp537. N-linked (GlcNAc...) asparagine glycans are attached at residues Asn554, Asn610, Asn617, Asn645, Asn696, Asn726, Asn823, and Asn974. A disordered region spans residues 640-666 (ELPKSNTSTPVRDKEEEPKPTVATPEP). The region spanning 696–804 (NETLLPDEVK…DDVTTKAQSR (109 aa)) is the DMAP1-binding domain. Residues 970 to 1005 (VQQLNISEVFDEIDTDHSGVLSDREIRTLATRIHEL) enclose the EF-hand domain. Positions 983, 985, 987, and 994 each coordinate Ca(2+). Residues Asn1021, Asn1029, and Asn1094 are each glycosylated (N-linked (GlcNAc...) asparagine). A helical transmembrane segment spans residues 1180 to 1200 (VLVTLVVFTVMSFFAEQLVML).

This sequence belongs to the stealth family. In terms of assembly, hexamer of two alpha, two beta and two gamma (GNPTG) subunits; disulfide-linked. The alpha and/or the beta subunits of the enzyme constitute the catalytic subunits. The alpha- and beta-subunits are generated by a proteolytic cleavage by mbtps1 protease at the Gln-893-Asp-894 bond.

Its subcellular location is the golgi apparatus membrane. The catalysed reaction is N(4)-[alpha-D-mannosyl-(1-&gt;2)-alpha-D-mannosyl-(glycan)]-L-asparaginyl-[protein] + UDP-N-acetyl-alpha-D-glucosamine = N(4)-[6-(N-acetyl-alpha-D-glucosaminyl-1-phospho)-alpha-D-mannosyl-(1-&gt;2)-alpha-D-mannosyl-(glycan)]-L-asparaginyl-[protein] + UMP + H(+). In terms of biological role, catalyzes the formation of mannose 6-phosphate (M6P) markers on high mannose type oligosaccharides in the Golgi apparatus. M6P residues are required to bind to the M6P receptors (MPR), which mediate the vesicular transport of lysosomal enzymes to the endosomal/prelysosomal compartment. This chain is N-acetylglucosamine-1-phosphotransferase subunits alpha/beta (gnptab), found in Danio rerio (Zebrafish).